A 76-amino-acid chain; its full sequence is MGACSSCLRLLLDAESDVKIHVIEPTSINNGEGSSVVHRDATAPPTPPVVPTSTLQVPGLQRARTPEPNDPRVANL.

The segment at 27–76 is disordered; that stretch reads SINNGEGSSVVHRDATAPPTPPVVPTSTLQVPGLQRARTPEPNDPRVANL.

This is an uncharacterized protein from Caenorhabditis elegans.